Consider the following 292-residue polypeptide: AKT-interacting protein (292 aa).

The interval 1–63 (MNPLWSMSAG…TSPAPAAQST (63 aa)) is disordered. The span at 14–23 (KRAEGEEKTL) shows a compositional bias: basic and acidic residues. S30 is modified (phosphoserine). Positions 74 to 222 (YLEYSLLAEF…VVDSVKVCTA (149 aa)) constitute a UBC core domain.

The protein belongs to the ubiquitin-conjugating enzyme family. FTS subfamily. As to quaternary structure, component of the FTS/Hook/FHIP complex (FHF complex), composed of AKTIP/FTS, FHIP1B, and one or more members of the Hook family of proteins HOOK1, HOOK2, and HOOK3. Interacts directly with HOOK1, HOOK2 and HOOK3. The FHF complex associates with the homotypic vesicular sorting complex (the HOPS complex). Also interacts with AKT1. May interact with FHIP1A. Ubiquitous. Highest expression in kidney, testis and brain and lowest in spleen and liver.

Its subcellular location is the cytoplasm. It is found in the cell membrane. Component of the FTS/Hook/FHIP complex (FHF complex). The FHF complex may function to promote vesicle trafficking and/or fusion via the homotypic vesicular protein sorting complex (the HOPS complex). Regulates apoptosis by enhancing phosphorylation and activation of AKT1. Increases release of TNFSF6 via the AKT1/GSK3B/NFATC1 signaling cascade. FHF complex promotes the distribution of AP-4 complex to the perinuclear area of the cell. The protein is AKT-interacting protein (Aktip) of Mus musculus (Mouse).